A 353-amino-acid polypeptide reads, in one-letter code: WAT1-related protein At3g28100 (353 aa).

10 consecutive transmembrane segments (helical) span residues 12–32, 43–63, 81–101, 105–125, 137–157, 187–207, 219–239, 252–272, 283–303, and 308–328; these read AVFLTAMLATETGVVGISTLF, YAFLGYSYLLASLLLLPSLFF, IGLLGLLGSMYVITGYIGIEY, TLASAISNITPALTFILAIIF, SVAKVMGTILSLIGALVVVLY, WLIGGALLTIRDIFVSVSFIL, FTVSFLYIVSVSIVTSMIGLV, FDITLITIVTMAIITSVYYVI, LYLAIFKPLSILIAVVMSAVF, and LYLGCLIGGLLITLGFYAVMW. The 129-residue stretch at 27–155 folds into the EamA domain; the sequence is GISTLFKVAT…LSLIGALVVV (129 aa).

It belongs to the drug/metabolite transporter (DMT) superfamily. Plant drug/metabolite exporter (P-DME) (TC 2.A.7.4) family.

It localises to the membrane. The protein is WAT1-related protein At3g28100 of Arabidopsis thaliana (Mouse-ear cress).